A 133-amino-acid polypeptide reads, in one-letter code: MGKPATKPAPKPSKQQDDKKSDLQQELVLQRLYDTVQSRRGTDPSLSHSARLMARGRNKIAQKFGEEAVECLIEAVNGNRKELIGESADVLYHLIVMWVDAGVSPEDVWTELKRREGTSGIAEKAARPKEKLG.

The disordered stretch occupies residues 1–22 (MGKPATKPAPKPSKQQDDKKSD).

It belongs to the PRA-PH family.

The protein resides in the cytoplasm. The enzyme catalyses 1-(5-phospho-beta-D-ribosyl)-ATP + H2O = 1-(5-phospho-beta-D-ribosyl)-5'-AMP + diphosphate + H(+). The protein operates within amino-acid biosynthesis; L-histidine biosynthesis; L-histidine from 5-phospho-alpha-D-ribose 1-diphosphate: step 2/9. The polypeptide is Phosphoribosyl-ATP pyrophosphatase (Gluconobacter oxydans (strain 621H) (Gluconobacter suboxydans)).